A 151-amino-acid chain; its full sequence is uncharacterized protein (151 aa).

Residues 6 to 143 form the Nudix hydrolase domain; the sequence is MKTLSAGIIF…QWQYVMGPSL (138 aa).

This is an uncharacterized protein from Escherichia coli (Bacteriophage T4).